A 64-amino-acid chain; its full sequence is Toxin BmKIT3 (64 aa).

The 61-residue stretch at 1-61 (DGYIRGSNGC…TWKSESNTCG (61 aa)) folds into the LCN-type CS-alpha/beta domain. 4 disulfide bridges follow: Cys10-Cys60, Cys14-Cys35, Cys21-Cys42, and Cys25-Cys44. Cys60 bears the Cysteine amide mark.

This sequence belongs to the long (4 C-C) scorpion toxin superfamily. Sodium channel inhibitor family. Beta subfamily. In terms of tissue distribution, expressed by the venom gland.

The protein resides in the secreted. In terms of biological role, depressant insect beta-toxins cause a transient contraction paralysis followed by a slow flaccid paralysis. They bind voltage-independently at site-4 of sodium channels (Nav) and shift the voltage of activation toward more negative potentials thereby affecting sodium channel activation and promoting spontaneous and repetitive firing. This is Toxin BmKIT3 from Olivierus martensii (Manchurian scorpion).